A 355-amino-acid chain; its full sequence is DNA polymerase IV (355 aa).

Residues 6–187 form the UmuC domain; sequence IIHVDMDAFY…LPVGKIHGVG (182 aa). The Mg(2+) site is built by aspartate 10 and aspartate 105. Glutamate 106 is a catalytic residue.

This sequence belongs to the DNA polymerase type-Y family. In terms of assembly, monomer. The cofactor is Mg(2+).

The protein localises to the cytoplasm. The catalysed reaction is DNA(n) + a 2'-deoxyribonucleoside 5'-triphosphate = DNA(n+1) + diphosphate. In terms of biological role, poorly processive, error-prone DNA polymerase involved in untargeted mutagenesis. Copies undamaged DNA at stalled replication forks, which arise in vivo from mismatched or misaligned primer ends. These misaligned primers can be extended by PolIV. Exhibits no 3'-5' exonuclease (proofreading) activity. May be involved in translesional synthesis, in conjunction with the beta clamp from PolIII. The protein is DNA polymerase IV of Alkalilimnicola ehrlichii (strain ATCC BAA-1101 / DSM 17681 / MLHE-1).